Reading from the N-terminus, the 418-residue chain is Histidine--tRNA ligase (418 aa).

Belongs to the class-II aminoacyl-tRNA synthetase family. Homodimer.

Its subcellular location is the cytoplasm. The enzyme catalyses tRNA(His) + L-histidine + ATP = L-histidyl-tRNA(His) + AMP + diphosphate + H(+). This is Histidine--tRNA ligase from Dehalococcoides mccartyi (strain ATCC BAA-2266 / KCTC 15142 / 195) (Dehalococcoides ethenogenes (strain 195)).